The primary structure comprises 87 residues: Acyl-CoA-binding protein (87 aa).

An N-acetylserine modification is found at Ser2. Residues 2–87 enclose the ACB domain; that stretch reads SQAEFDKAAE…VEELKKKYGI (86 aa). Residue Lys8 is modified to N6-acetyllysine; alternate. Position 8 is an N6-succinyllysine; alternate (Lys8). Residue Lys14 participates in an acyl-CoA binding. Lys17 carries the post-translational modification N6-succinyllysine. Lys19 carries the post-translational modification N6-acetyllysine. Tyr29 carries the phosphotyrosine modification. An acyl-CoA is bound by residues 29 to 33, Lys51, Lys55, and Tyr74; that span reads YSHYK. Lys51 is subject to N6-acetyllysine. At Lys55 the chain carries N6-acetyllysine; alternate. Position 55 is an N6-succinyllysine; alternate (Lys55). At Lys55 the chain carries N6-(2-hydroxyisobutyryl)lysine; alternate. Residue Lys55 is modified to N6-malonyllysine; alternate. An N6-acetyllysine; alternate modification is found at Lys77. Position 77 is an N6-succinyllysine; alternate (Lys77).

It belongs to the ACBP family. As to quaternary structure, monomer.

It localises to the endoplasmic reticulum. Its subcellular location is the golgi apparatus. Functionally, binds medium- and long-chain acyl-CoA esters with very high affinity and may function as an intracellular carrier of acyl-CoA esters. This chain is Acyl-CoA-binding protein (DBI), found in Chaetophractus villosus (South American armadillo).